The following is a 176-amino-acid chain: Methylated-DNA--protein-cysteine methyltransferase (176 aa).

Cys142 acts as the Nucleophile; methyl group acceptor in catalysis.

This sequence belongs to the MGMT family.

The protein localises to the cytoplasm. The catalysed reaction is a 6-O-methyl-2'-deoxyguanosine in DNA + L-cysteinyl-[protein] = S-methyl-L-cysteinyl-[protein] + a 2'-deoxyguanosine in DNA. It catalyses the reaction a 4-O-methyl-thymidine in DNA + L-cysteinyl-[protein] = a thymidine in DNA + S-methyl-L-cysteinyl-[protein]. In terms of biological role, involved in the cellular defense against the biological effects of O6-methylguanine (O6-MeG) and O4-methylthymine (O4-MeT) in DNA. Repairs the methylated nucleobase in DNA by stoichiometrically transferring the methyl group to a cysteine residue in the enzyme. This is a suicide reaction: the enzyme is irreversibly inactivated. The chain is Methylated-DNA--protein-cysteine methyltransferase from Methanothermobacter thermautotrophicus (strain ATCC 29096 / DSM 1053 / JCM 10044 / NBRC 100330 / Delta H) (Methanobacterium thermoautotrophicum).